Consider the following 735-residue polypeptide: Catalase-peroxidase (735 aa).

Residues 1–31 (MENNTNPISGQGKCPFSGGAAKQSAGAGTRN) are disordered. Residues 17–28 (SGGAAKQSAGAG) are compositionally biased toward low complexity. The tryptophyl-tyrosyl-methioninium (Trp-Tyr) (with M-252) cross-link spans 103-226 (WHSAGTYRVA…LAAVQMGLIY (124 aa)). The active-site Proton acceptor is His-104. Positions 226–252 (YVNPEGPNGNPDPLASARDIRETFARM) form a cross-link, tryptophyl-tyrosyl-methioninium (Tyr-Met) (with W-103). His-267 contributes to the heme b binding site. The segment at 352–371 (KPKNGAGAGTVPDAHNSSKS) is disordered.

Belongs to the peroxidase family. Peroxidase/catalase subfamily. In terms of assembly, homodimer or homotetramer. Heme b serves as cofactor. Post-translationally, formation of the three residue Trp-Tyr-Met cross-link is important for the catalase, but not the peroxidase activity of the enzyme.

It carries out the reaction H2O2 + AH2 = A + 2 H2O. The enzyme catalyses 2 H2O2 = O2 + 2 H2O. Bifunctional enzyme with both catalase and broad-spectrum peroxidase activity. This Flavobacterium psychrophilum (strain ATCC 49511 / DSM 21280 / CIP 103535 / JIP02/86) protein is Catalase-peroxidase.